Consider the following 275-residue polypeptide: Putative hydroxypyruvate isomerase (275 aa).

Active-site proton donor/acceptor residues include glutamate 147 and glutamate 246.

It belongs to the hyi family.

It catalyses the reaction 3-hydroxypyruvate = 2-hydroxy-3-oxopropanoate. Catalyzes the reversible isomerization between hydroxypyruvate and 2-hydroxy-3-oxopropanoate (also termed tartronate semialdehyde). The protein is Putative hydroxypyruvate isomerase (hyi) of Xenopus laevis (African clawed frog).